Reading from the N-terminus, the 350-residue chain is Bifunctional methylenetetrahydrofolate dehydrogenase/cyclohydrolase, mitochondrial (350 aa).

Residues 1–35 constitute a mitochondrion transit peptide; that stretch reads MAAASFITSLVTRLLRSAQSGRLHQRPFHLSAVRN. Residue lysine 50 is modified to N6-acetyllysine; alternate. A Glycyl lysine isopeptide (Lys-Gly) (interchain with G-Cter in SUMO2); alternate cross-link involves residue lysine 50. Residues 84-88 and 131-133 contribute to the substrate site; these read YVLNK and VQL. NAD(+) contacts are provided by residues 200-202 and arginine 233; that span reads GRS. 309 to 313 is a substrate binding site; the sequence is PGGVG.

Belongs to the tetrahydrofolate dehydrogenase/cyclohydrolase family. As to quaternary structure, homodimer. Mg(2+) is required as a cofactor.

The protein resides in the mitochondrion. It carries out the reaction (6R)-5,10-methylene-5,6,7,8-tetrahydrofolate + NAD(+) = (6R)-5,10-methenyltetrahydrofolate + NADH. The enzyme catalyses (6R)-5,10-methenyltetrahydrofolate + H2O = (6R)-10-formyltetrahydrofolate + H(+). Its function is as follows. Although its dehydrogenase activity is NAD-specific, it can also utilize NADP at a reduced efficiency. This is Bifunctional methylenetetrahydrofolate dehydrogenase/cyclohydrolase, mitochondrial (MTHFD2) from Bos taurus (Bovine).